A 121-amino-acid chain; its full sequence is Large ribosomal subunit protein bL19 (121 aa).

Belongs to the bacterial ribosomal protein bL19 family.

Functionally, this protein is located at the 30S-50S ribosomal subunit interface and may play a role in the structure and function of the aminoacyl-tRNA binding site. This Acidothermus cellulolyticus (strain ATCC 43068 / DSM 8971 / 11B) protein is Large ribosomal subunit protein bL19.